We begin with the raw amino-acid sequence, 154 residues long: MKLLVLCIFAMMATLAMSRRWNFVTPREVNKAFEVALKVQIIAGFDRTLVKWLRAHGRSLSHVQKKALYFVNRRYMQTHWANYMLWVNKKIDALGRTAVVADYTRLGAEIGRRIDMDYFYNFLKGRNMIPKYLPYMEEINRMRSADIPIRYRGK.

The N-terminal stretch at Met1 to Ser18 is a signal peptide.

As to quaternary structure, homodimer. Sperm.

In terms of biological role, dissolves the egg vitelline layer nonenzymatically during fertilization. It creates a hole of about 3 mu-m in diameter through which the sperm pass. This is Egg-lysin from Haliotis walallensis (Flat abalone).